Consider the following 254-residue polypeptide: Nodulation protein J (254 aa).

A run of 6 helical transmembrane segments spans residues 25–45, 60–80, 106–126, 133–153, 169–189, and 230–250; these read ASVL…GVGL, FLAC…EMLY, LIGE…IVAV, YIPG…ALIF, LFAF…GVIV, and LLLS…VICV. The ABC transmembrane type-2 domain occupies 25–251; the sequence is ASVLGSVIDP…FISAKVICVR (227 aa).

It belongs to the ABC-2 integral membrane protein family. Lipooligosaccharide exporter (TC 3.A.1.102) subfamily. As to quaternary structure, the complex is composed of two ATP-binding proteins (NodI) and two transmembrane proteins (NodJ).

It is found in the cell inner membrane. Functionally, part of the ABC transporter complex NodIJ involved in the export of the nodulation factors (Nod factors), the bacterial signal molecules that induce symbiosis and subsequent nodulation induction. Nod factors are LCO (lipo-chitin oligosaccharide), a modified beta-1,4-linked N-acetylglucosamine oligosaccharide. This subunit encodes the transporter. This Azorhizobium caulinodans (strain ATCC 43989 / DSM 5975 / JCM 20966 / LMG 6465 / NBRC 14845 / NCIMB 13405 / ORS 571) protein is Nodulation protein J (nodJ).